We begin with the raw amino-acid sequence, 180 residues long: Large ribosomal subunit protein uL5 (180 aa).

This sequence belongs to the universal ribosomal protein uL5 family. In terms of assembly, part of the 50S ribosomal subunit; part of the 5S rRNA/L5/L18/L25 subcomplex. Contacts the 5S rRNA and the P site tRNA. Forms a bridge to the 30S subunit in the 70S ribosome.

This is one of the proteins that bind and probably mediate the attachment of the 5S RNA into the large ribosomal subunit, where it forms part of the central protuberance. In the 70S ribosome it contacts protein S13 of the 30S subunit (bridge B1b), connecting the 2 subunits; this bridge is implicated in subunit movement. Contacts the P site tRNA; the 5S rRNA and some of its associated proteins might help stabilize positioning of ribosome-bound tRNAs. In Polynucleobacter necessarius subsp. necessarius (strain STIR1), this protein is Large ribosomal subunit protein uL5.